Consider the following 85-residue polypeptide: Fungal defensin triintsin (85 aa).

The N-terminal stretch at 1 to 21 (MQFTKLATVLIVSLMGSAAIA) is a signal peptide. Positions 22–47 (APSVDNAPAVAAEEVAAAPAENLEKR) are excised as a propeptide. Disulfide bonds link cysteine 51–cysteine 72, cysteine 58–cysteine 80, and cysteine 62–cysteine 82.

Belongs to the invertebrate defensin family. Disulfide bonds are essential for antimicrobial activity.

The protein resides in the secreted. Antimicrobial peptide with broad-spectrum activity against Gram-positive bacteria, Gram-negative bacteria, and fungi. Also inhibits clinical isolates, including methicillin-resistant S.aureus (MRSA) (MIC=32 uM), K.pneumoniae, C.albicans and C.parapsilosis. Displays minimal inhibitory concentration (MIC) values similar to minimal bactericidal concentrations (MBC), suggesting a disruptive mechanism mode of action associated with membrane lysis. In vitro, shows hemolytic activity against human red blood cells. In Trichophyton interdigitale (strain MR816), this protein is Fungal defensin triintsin.